A 297-amino-acid polypeptide reads, in one-letter code: Trimeric intracellular cation channel type A (297 aa).

Residues 1–18 (MDLISSLSLGELALSFSR) are Lumenal-facing. The chain crosses the membrane as a helical span at residues 19-39 (VPLFPVFDLSYFIVSIIYLKY). Over 40–51 (EPGSVELSRRHP) the chain is Cytoplasmic. Residues 52-72 (VASWLCAMLHCFGSYILADLL) traverse the membrane as a helical segment. Topologically, residues 73–85 (LGEPIIDYFSNSS) are lumenal. Glycine 74 serves as a coordination point for Ca(2+). Residues 86-106 (SILLASGVWYLIFFCPLDLFY) traverse the membrane as a helical segment. Residues 107-143 (KCVCFLPVKLIFVAMKEVVRVRKIAVGIHHAHHYHHG) lie on the Cytoplasmic side of the membrane. 2 residues coordinate a 1,2-diacyl-sn-glycero-3-phospho-(1D-myo-inositol-4,5-bisphosphate): lysine 122 and arginine 126. The helical transmembrane segment at 144–164 (WFIMIATGWVKGSGVALLSNL) threads the bilayer. At 165–177 (EQLLRGVWKPETN) the chain is on the lumenal side. The chain crosses the membrane as a helical span at residues 178 to 198 (EILHMSFPTKASLYGAILFTL). Topologically, residues 199 to 208 (QQTRWLPVSK) are cytoplasmic. Residues 209-229 (ASLIFVFTMFMVSCKVFLTAT) form a helical membrane-spanning segment. Over 230–233 (HSHS) the chain is Lumenal. The helical transmembrane segment at 234–254 (SPFDVLEGYICPVLFGATWGG) threads the bilayer. Topologically, residues 255-297 (DHHHDNHGAPHGMGLGTQHSGLPAKAKEELSEGFRKKKTKKAD) are cytoplasmic. Positions 259–297 (DNHGAPHGMGLGTQHSGLPAKAKEELSEGFRKKKTKKAD) are disordered. Residues 279-288 (KAKEELSEGF) show a composition bias toward basic and acidic residues.

It belongs to the TMEM38 family. In terms of assembly, homotrimer; conformation seems to be controled by binding to diacylglycerol (DAG).

Its subcellular location is the sarcoplasmic reticulum membrane. It is found in the nucleus membrane. It carries out the reaction K(+)(in) = K(+)(out). Its activity is regulated as follows. Channel activity is activated by a change of voltage within the sarcoplasmic reticulum lumen and blocked by luminal high Ca(2+) levels. Intracellular monovalent cation channel required for maintenance of rapid intracellular calcium release. Acts as a potassium counter-ion channel that functions in synchronization with calcium release from intracellular stores. Opened by a change of voltage within the sarcoplasmic reticulum lumen. This chain is Trimeric intracellular cation channel type A, found in Rattus norvegicus (Rat).